The primary structure comprises 339 residues: U11/U12 small nuclear ribonucleoprotein 48 kDa protein (339 aa).

A CHHC U11-48K-type zinc finger spans residues 55 to 82 (VVICPYDSNHHMPKSSLAKHMASCRLRK). Zn(2+)-binding residues include Cys-58, His-64, His-74, and Cys-78. Residues Lys-87 and Lys-104 each participate in a glycyl lysine isopeptide (Lys-Gly) (interchain with G-Cter in SUMO2) cross-link. The tract at residues 255-339 (HWQEEQEKAE…HSHKRRKQKI (85 aa)) is disordered. Positions 294 to 309 (RHRRDRSRSPHKRKRN) are enriched in basic residues. The span at 310–328 (KDKDKNCESRRRKERDGER) shows a compositional bias: basic and acidic residues. Residues 329–339 (HHSHKRRKQKI) show a composition bias toward basic residues.

In terms of assembly, component of the U11/U12 snRNPs that are part of the U12-type spliceosome. Not found in the major spliceosome.

The protein localises to the nucleus. Likely involved in U12-type 5' splice site recognition. The sequence is that of U11/U12 small nuclear ribonucleoprotein 48 kDa protein (SNRNP48) from Homo sapiens (Human).